Reading from the N-terminus, the 265-residue chain is Phosphonoacetaldehyde hydrolase (265 aa).

Residue Asp10 is the Nucleophile of the active site. 2 residues coordinate Mg(2+): Asp10 and Ala12. Catalysis depends on Lys51, which acts as the Schiff-base intermediate with substrate. Position 184 (Asp184) interacts with Mg(2+).

This sequence belongs to the HAD-like hydrolase superfamily. PhnX family. Homodimer. The cofactor is Mg(2+).

It catalyses the reaction phosphonoacetaldehyde + H2O = acetaldehyde + phosphate + H(+). Involved in phosphonate degradation. In Latilactobacillus sakei subsp. sakei (strain 23K) (Lactobacillus sakei subsp. sakei), this protein is Phosphonoacetaldehyde hydrolase.